The following is a 519-amino-acid chain: Membrane protein insertase YidC (519 aa).

The next 6 helical transmembrane spans lie at 6-26, 298-318, 324-344, 390-410, 434-454, and 471-491; these read ILFV…FAQP, VDFG…VFFY, YGWA…PLTL, LGGC…FTML, FMQF…IGMF, and IMYI…SGLV.

Belongs to the OXA1/ALB3/YidC family. Type 1 subfamily. Interacts with the Sec translocase complex via SecD. Specifically interacts with transmembrane segments of nascent integral membrane proteins during membrane integration.

The protein localises to the cell inner membrane. In terms of biological role, required for the insertion and/or proper folding and/or complex formation of integral membrane proteins into the membrane. Involved in integration of membrane proteins that insert both dependently and independently of the Sec translocase complex, as well as at least some lipoproteins. Aids folding of multispanning membrane proteins. This Endomicrobium trichonymphae protein is Membrane protein insertase YidC.